A 105-amino-acid polypeptide reads, in one-letter code: ATPase inhibitor A, mitochondrial (105 aa).

The disordered stretch occupies residues 17–52 (MSSDQLGELGTGAGKGGGGGGSVRAAGGSFGRREAA). Positions 22–51 (LGELGTGAGKGGGGGGSVRAAGGSFGRREA) are N-terminal inhibitory region. The segment covering 25 to 38 (LGTGAGKGGGGGGS) has biased composition (gly residues). Positions 58 to 105 (FRQKEREQLAALKNHHEEEIDHHKKEIERLQREIDRHKGKIRKLKHDD) form a coiled coil. Residues 73–105 (HEEEIDHHKKEIERLQREIDRHKGKIRKLKHDD) form an antiparallel alpha-helical coiled coil region region.

It belongs to the ATPase inhibitor family. As to quaternary structure, homodimer; represents the active form and is present at a pH value below 6.5. Homotetramer; represents the inactive form and is present at a pH value above 7.0.

It is found in the mitochondrion. Its function is as follows. Endogenous F(1)F(o)-ATPase inhibitor limiting ATP depletion when the mitochondrial membrane potential falls below a threshold and the F(1)F(o)-ATP synthase starts hydrolyzing ATP to pump protons out of the mitochondrial matrix. Required to avoid the consumption of cellular ATP when the F(1)F(o)-ATP synthase enzyme acts as an ATP hydrolase. Indirectly acts as a regulator of heme synthesis in erythroid tissues: regulates heme synthesis by modulating the mitochondrial pH and redox potential, allowing fech to efficiently catalyze the incorporation of iron into protoporphyrin IX to produce heme. The protein is ATPase inhibitor A, mitochondrial of Danio rerio (Zebrafish).